The following is a 431-amino-acid chain: ABSCISIC ACID-INSENSITIVE 5-like protein 7 (431 aa).

The disordered stretch occupies residues 1–29 (MGTHINFNNLGGGGHPGGEGSSNQMKPTG). The segment covering 10–20 (LGGGGHPGGEG) has biased composition (gly residues). Ser-39 and Ser-61 each carry phosphoserine. At Ser-110 the chain carries Phosphoserine; by CPK32. The disordered stretch occupies residues 133–153 (DGNMEGSSGGGGESNVPPGRQ). Thr-155 carries the post-translational modification Phosphothreonine. Over residues 319–331 (SPGTSSAENNSLS) the composition is skewed to polar residues. Residues 319–338 (SPGTSSAENNSLSPVPYVLN) form a disordered region. Positions 340–347 (GRRSNTGL) match the Nuclear localization signal motif. The bZIP domain maps to 351-414 (IERRQRRMIK…KNELKETSKR (64 aa)). The basic motif stretch occupies residues 353–372 (RRQRRMIKNRESAARSRARK). A coiled-coil region spans residues 372 to 411 (KQAYTLELEAEIEKLKKTNQELQKKQAEMVEMQKNELKET). Positions 379-393 (LEAEIEKLKKTNQEL) are leucine-zipper.

Belongs to the bZIP family. ABI5 subfamily. As to quaternary structure, DNA-binding heterodimer. Interacts with CPK32 and the AFP proteins AFP1, AFP2 and AFP3. Interacts with FREE1 (via C-terminus). In terms of processing, phosphorylated by CPK4 and CPK11 in vitro. In terms of tissue distribution, expressed in roots, leaves, flowers and immatures siliques.

The protein localises to the nucleus. Functionally, functions as a transcriptional activator in the ABA-inducible expression of LTI65/RD29B (AC Q04980). Binds specifically to the ABA-responsive element (ABRE) of the LTI65/RD29B (AC Q04980) gene promoter. Binds to the promoter of FREE1 and activates its transcription. The sequence is that of ABSCISIC ACID-INSENSITIVE 5-like protein 7 from Arabidopsis thaliana (Mouse-ear cress).